Reading from the N-terminus, the 153-residue chain is Pheromone-binding protein Gp-9 (153 aa).

The N-terminal stretch at 1–19 (MKTFVLHIFIFALVAFASA) is a signal peptide. 3 disulfide bridges follow: C37-C77, C73-C129, and C118-C138.

This sequence belongs to the PBP/GOBP family. As to quaternary structure, homodimer.

Its subcellular location is the secreted. Colony queen number, a major feature of social organization, is associated with worker genotype for Gp-9. Colonies are headed by either a single reproductive queen (monogyne form) or multiple queens (polygyne form). Differences in worker Gp-9 genotypes between social forms may cause differences in workers' abilities to recognize queens and regulate their numbers. The sequence is that of Pheromone-binding protein Gp-9 from Solenopsis electra (Fire ant).